The sequence spans 473 residues: ATP synthase subunit beta (473 aa).

Residue G158–T165 participates in ATP binding.

This sequence belongs to the ATPase alpha/beta chains family. In terms of assembly, F-type ATPases have 2 components, CF(1) - the catalytic core - and CF(0) - the membrane proton channel. CF(1) has five subunits: alpha(3), beta(3), gamma(1), delta(1), epsilon(1). CF(0) has three main subunits: a(1), b(2) and c(9-12). The alpha and beta chains form an alternating ring which encloses part of the gamma chain. CF(1) is attached to CF(0) by a central stalk formed by the gamma and epsilon chains, while a peripheral stalk is formed by the delta and b chains.

The protein resides in the cell membrane. It carries out the reaction ATP + H2O + 4 H(+)(in) = ADP + phosphate + 5 H(+)(out). Its function is as follows. Produces ATP from ADP in the presence of a proton gradient across the membrane. The catalytic sites are hosted primarily by the beta subunits. This Priestia megaterium (strain ATCC 12872 / QMB1551) (Bacillus megaterium) protein is ATP synthase subunit beta.